We begin with the raw amino-acid sequence, 877 residues long: Putative leucine-rich repeat receptor-like serine/threonine-protein kinase At2g19230 (877 aa).

Positions 1–24 (MGNFNFLPLVSFASFVVVLVLVCA) are cleaved as a signal peptide. The Extracellular segment spans residues 25–517 (QDQSGFVSID…RNKKTERKEY (493 aa)). Asn142, Asn233, Asn261, Asn295, Asn405, and Asn420 each carry an N-linked (GlcNAc...) asparagine glycan. LRR repeat units follow at residues 439–462 (PLQK…ANLP) and 463–484 (DLTE…KLLE). A helical membrane pass occupies residues 518 to 538 (IIPSVASVTGLFFLLLALISF). Topologically, residues 539–877 (WQFKKRQQSV…VDPGVLPQPR (339 aa)) are cytoplasmic. The 274-residue stretch at 569 to 842 (NNFERVLGQG…QVVAELKESL (274 aa)) folds into the Protein kinase domain. Residues 575 to 583 (LGQGGFGKV) and Lys596 contribute to the ATP site. At Tyr641 the chain carries Phosphotyrosine. The active-site Proton acceptor is the Asp692. Ser726 is modified (phosphoserine). Thr727 and Thr732 each carry phosphothreonine.

It belongs to the protein kinase superfamily. Ser/Thr protein kinase family.

It is found in the cell membrane. It catalyses the reaction L-seryl-[protein] + ATP = O-phospho-L-seryl-[protein] + ADP + H(+). The catalysed reaction is L-threonyl-[protein] + ATP = O-phospho-L-threonyl-[protein] + ADP + H(+). The polypeptide is Putative leucine-rich repeat receptor-like serine/threonine-protein kinase At2g19230 (Arabidopsis thaliana (Mouse-ear cress)).